We begin with the raw amino-acid sequence, 319 residues long: Putative binding protein BAB2_1146 (319 aa).

The N-terminal stretch at 1–22 is a signal peptide; that stretch reads MKRRTFLAMSLALTFLPSVALA.

The protein belongs to the bacterial solute-binding protein SsuA/TauA family. In terms of assembly, the complex is composed of two ATP-binding proteins (BAB2_1147), two transmembrane proteins (BAB2_1148) and a solute-binding protein (BAB2_1146).

It is found in the periplasm. Functionally, probably part of an ABC transporter complex. This Brucella abortus (strain 2308) protein is Putative binding protein BAB2_1146.